A 172-amino-acid polypeptide reads, in one-letter code: Large ribosomal subunit protein uL10 (172 aa).

Belongs to the universal ribosomal protein uL10 family. As to quaternary structure, part of the ribosomal stalk of the 50S ribosomal subunit. The N-terminus interacts with L11 and the large rRNA to form the base of the stalk. The C-terminus forms an elongated spine to which L12 dimers bind in a sequential fashion forming a multimeric L10(L12)X complex.

Its function is as follows. Forms part of the ribosomal stalk, playing a central role in the interaction of the ribosome with GTP-bound translation factors. The chain is Large ribosomal subunit protein uL10 from Rhodospirillum rubrum (strain ATCC 11170 / ATH 1.1.1 / DSM 467 / LMG 4362 / NCIMB 8255 / S1).